A 278-amino-acid polypeptide reads, in one-letter code: Sulfur carrier protein FdhD (278 aa).

The active-site Cysteine persulfide intermediate is the Cys-121. 260-265 (FCKPGR) is a Mo-bis(molybdopterin guanine dinucleotide) binding site.

This sequence belongs to the FdhD family.

The protein resides in the cytoplasm. Functionally, required for formate dehydrogenase (FDH) activity. Acts as a sulfur carrier protein that transfers sulfur from IscS to the molybdenum cofactor prior to its insertion into FDH. In Salmonella schwarzengrund (strain CVM19633), this protein is Sulfur carrier protein FdhD.